Consider the following 159-residue polypeptide: Endoribonuclease YbeY (159 aa).

Zn(2+) is bound by residues His-114, His-118, and His-124.

Belongs to the endoribonuclease YbeY family. It depends on Zn(2+) as a cofactor.

The protein localises to the cytoplasm. Functionally, single strand-specific metallo-endoribonuclease involved in late-stage 70S ribosome quality control and in maturation of the 3' terminus of the 16S rRNA. In Pectobacterium carotovorum subsp. carotovorum (strain PC1), this protein is Endoribonuclease YbeY.